The following is a 133-amino-acid chain: Small ribosomal subunit protein uS8 (133 aa).

It belongs to the universal ribosomal protein uS8 family. As to quaternary structure, part of the 30S ribosomal subunit. Contacts proteins S5 and S12.

Functionally, one of the primary rRNA binding proteins, it binds directly to 16S rRNA central domain where it helps coordinate assembly of the platform of the 30S subunit. This is Small ribosomal subunit protein uS8 from Prochlorococcus marinus (strain MIT 9303).